The primary structure comprises 289 residues: MSWLTKLLPPKIKREQGPQRRGNLPEGLWSKCPSCEAVLYATDLENNLQVCPKCGHHNRLNSRQRLDLLLDSEGRFEIGAEVLPVDSLKFKDSKKYPDRLMEANESTGESDSLVVLQGAIKTMPVVAAAFEFDFMGGSMGSVLGERFVRGVQAAVEQKMPFICITASGGARMQEGLFSLMQMAKTTAALTKLSAAGLPFISILTDPTMGGVSASFAFVGDVVIAEPKALIGFAGPRVIEQTVRETLPEGFQRSEFLLEKGAIDMIVDRRELRDQVARVLALLQKLPAAA.

The region spanning 28–289 (LWSKCPSCEA…ALLQKLPAAA (262 aa)) is the CoA carboxyltransferase N-terminal domain. The Zn(2+) site is built by cysteine 32, cysteine 35, cysteine 51, and cysteine 54. Residues 32-54 (CPSCEAVLYATDLENNLQVCPKC) form a C4-type zinc finger.

It belongs to the AccD/PCCB family. As to quaternary structure, acetyl-CoA carboxylase is a heterohexamer composed of biotin carboxyl carrier protein (AccB), biotin carboxylase (AccC) and two subunits each of ACCase subunit alpha (AccA) and ACCase subunit beta (AccD). Zn(2+) is required as a cofactor.

The protein localises to the cytoplasm. The enzyme catalyses N(6)-carboxybiotinyl-L-lysyl-[protein] + acetyl-CoA = N(6)-biotinyl-L-lysyl-[protein] + malonyl-CoA. Its pathway is lipid metabolism; malonyl-CoA biosynthesis; malonyl-CoA from acetyl-CoA: step 1/1. In terms of biological role, component of the acetyl coenzyme A carboxylase (ACC) complex. Biotin carboxylase (BC) catalyzes the carboxylation of biotin on its carrier protein (BCCP) and then the CO(2) group is transferred by the transcarboxylase to acetyl-CoA to form malonyl-CoA. The chain is Acetyl-coenzyme A carboxylase carboxyl transferase subunit beta from Dechloromonas aromatica (strain RCB).